We begin with the raw amino-acid sequence, 205 residues long: Adenylyl-sulfate kinase (205 aa).

35–42 (GLSGAGKS) serves as a coordination point for ATP. The active-site Phosphoserine intermediate is the S109.

Belongs to the APS kinase family.

It catalyses the reaction adenosine 5'-phosphosulfate + ATP = 3'-phosphoadenylyl sulfate + ADP + H(+). The protein operates within sulfur metabolism; hydrogen sulfide biosynthesis; sulfite from sulfate: step 2/3. Its function is as follows. Catalyzes the synthesis of activated sulfate. The chain is Adenylyl-sulfate kinase from Acaryochloris marina (strain MBIC 11017).